The chain runs to 320 residues: MHMTSPSAKPLVVSIMGPTASGKTATALAIAEQIPSEIISVDSALVYREMNIGTAKPTDEERASVPHHLIDILDPLDAYSVMQFRQDALRLVAEISARGKLALLVGGTMLYFKGLKDGLDALPQADAALRAELDAEAALIGSPAMHAKLAKLDPITAARLKPNDTQRIQRALEIITLTGQPMSALLAQAPKSELPFTLLPIALEPSERSVLHARIATRFDAMLKDGGLLDEVRALRARGDLHPGLPSMRCVGYRQSWEYLDGAYGLAELREKGIAATRQLAKRQLTWLRGMPERQTIDCLAPDVAGSILRKIVSADKVPK.

17–24 lines the ATP pocket; it reads GPTASGKT. Substrate is bound at residue 19–24; sequence TASGKT. 3 interaction with substrate tRNA regions span residues 42-45, 166-170, and 249-254; these read DSAL, QRIQR, and RCVGYR.

The protein belongs to the IPP transferase family. As to quaternary structure, monomer. Mg(2+) serves as cofactor.

It carries out the reaction adenosine(37) in tRNA + dimethylallyl diphosphate = N(6)-dimethylallyladenosine(37) in tRNA + diphosphate. Its function is as follows. Catalyzes the transfer of a dimethylallyl group onto the adenine at position 37 in tRNAs that read codons beginning with uridine, leading to the formation of N6-(dimethylallyl)adenosine (i(6)A). This Herminiimonas arsenicoxydans protein is tRNA dimethylallyltransferase.